The chain runs to 185 residues: Large ribosomal subunit protein bL25 (185 aa).

The protein belongs to the bacterial ribosomal protein bL25 family. CTC subfamily. In terms of assembly, part of the 50S ribosomal subunit; part of the 5S rRNA/L5/L18/L25 subcomplex. Contacts the 5S rRNA. Binds to the 5S rRNA independently of L5 and L18.

In terms of biological role, this is one of the proteins that binds to the 5S RNA in the ribosome where it forms part of the central protuberance. This is Large ribosomal subunit protein bL25 from Chlamydia caviae (strain ATCC VR-813 / DSM 19441 / 03DC25 / GPIC) (Chlamydophila caviae).